The sequence spans 191 residues: GDP-mannose pyrophosphatase (191 aa).

GDP-alpha-D-mannose-binding positions include tyrosine 17, 38–40 (KRE), arginine 67, and 85–87 (AGL). Positions 43–180 (DRGNGATILL…EIRDGKTVLL (138 aa)) constitute a Nudix hydrolase domain. Mg(2+)-binding residues include alanine 85, glutamate 100, and glutamate 104. Positions 86–106 (GLLDNDEPEVCIRKEAIEETG) match the Nudix box motif. Residues glutamate 104, glutamate 127, 150-151 (DE), and lysine 176 each bind GDP-alpha-D-mannose. Glutamate 151 lines the Mg(2+) pocket.

Belongs to the Nudix hydrolase family. NudK subfamily. In terms of assembly, homodimer. Requires Mg(2+) as cofactor.

It catalyses the reaction GDP-alpha-D-mannose + H2O = alpha-D-mannose 1-phosphate + GMP + 2 H(+). Its function is as follows. Nucleoside diphosphate sugar hydrolase that hydrolyzes GDP-mannose as its preferred substrate, yielding GMP and mannose-1-phosphate. This Salmonella choleraesuis (strain SC-B67) protein is GDP-mannose pyrophosphatase (nudK).